Here is a 383-residue protein sequence, read N- to C-terminus: Centractin (383 aa).

The interval 227–246 (PQKEEELLEPDSSSSKPVQP) is disordered.

The protein belongs to the actin family. ARP1 subfamily.

The protein localises to the cytoplasm. The protein resides in the cytoskeleton. It is found in the microtubule organizing center. It localises to the centrosome. In terms of biological role, component of a multi-subunit complex, PPK2 (poly P kinase complex 2) involved in microtubule based vesicle motility. It is associated with the centrosome. PPK2 complex can synthesize a poly chain of hundreds of phosphate residues linked by ATP-like bonds. The protein is Centractin (arpA) of Dictyostelium discoideum (Social amoeba).